The sequence spans 36 residues: Pancreatic polypeptide (36 aa).

Y36 is subject to Tyrosine amide.

Belongs to the NPY family.

It is found in the secreted. Functionally, hormone secreted by pancreatic cells that acts as a regulator of pancreatic and gastrointestinal functions probably by signaling through the G protein-coupled receptor NPY4R2. The chain is Pancreatic polypeptide (PPY) from Ceratotherium simum (White rhinoceros).